Consider the following 879-residue polypeptide: Valine--tRNA ligase (879 aa).

The 'HIGH' region signature appears at 43–53 (PNVTGVLHMGH). Positions 534-538 (KMSKS) match the 'KMSKS' region motif. Lysine 537 provides a ligand contact to ATP. A coiled-coil region spans residues 807 to 878 (LGNMIDVEAE…LKESIAALKK (72 aa)).

The protein belongs to the class-I aminoacyl-tRNA synthetase family. ValS type 1 subfamily. As to quaternary structure, monomer.

It localises to the cytoplasm. The enzyme catalyses tRNA(Val) + L-valine + ATP = L-valyl-tRNA(Val) + AMP + diphosphate. Functionally, catalyzes the attachment of valine to tRNA(Val). As ValRS can inadvertently accommodate and process structurally similar amino acids such as threonine, to avoid such errors, it has a 'posttransfer' editing activity that hydrolyzes mischarged Thr-tRNA(Val) in a tRNA-dependent manner. In Bacteroides thetaiotaomicron (strain ATCC 29148 / DSM 2079 / JCM 5827 / CCUG 10774 / NCTC 10582 / VPI-5482 / E50), this protein is Valine--tRNA ligase.